The sequence spans 450 residues: UPF0210 protein CPE1497 (450 aa).

Belongs to the UPF0210 family. In terms of assembly, homodimer.

The chain is UPF0210 protein CPE1497 from Clostridium perfringens (strain 13 / Type A).